A 255-amino-acid chain; its full sequence is Type III pantothenate kinase (255 aa).

An ATP-binding site is contributed by 12 to 19; the sequence is DIGNSYTK. A substrate-binding site is contributed by 109-112; it reads GDDL. Asp-111 acts as the Proton acceptor in catalysis. Thr-133 is a binding site for ATP. A substrate-binding site is contributed by Thr-185.

The protein belongs to the type III pantothenate kinase family. As to quaternary structure, homodimer. The cofactor is NH4(+). It depends on K(+) as a cofactor.

Its subcellular location is the cytoplasm. The catalysed reaction is (R)-pantothenate + ATP = (R)-4'-phosphopantothenate + ADP + H(+). The protein operates within cofactor biosynthesis; coenzyme A biosynthesis; CoA from (R)-pantothenate: step 1/5. In terms of biological role, catalyzes the phosphorylation of pantothenate (Pan), the first step in CoA biosynthesis. This chain is Type III pantothenate kinase, found in Malacoplasma penetrans (strain HF-2) (Mycoplasma penetrans).